The sequence spans 361 residues: Chorismate synthase (361 aa).

Positions 40 to 49 (DLQHDLDRRR) are enriched in basic and acidic residues. The interval 40–60 (DLQHDLDRRRPGTSRHTTQRR) is disordered. NADP(+)-binding residues include Arg-48 and Arg-54. FMN is bound by residues 125–127 (RSS), 237–238 (NA), Gly-277, 292–296 (KPTSS), and Arg-318.

The protein belongs to the chorismate synthase family. As to quaternary structure, homotetramer. The cofactor is FMNH2.

The enzyme catalyses 5-O-(1-carboxyvinyl)-3-phosphoshikimate = chorismate + phosphate. It functions in the pathway metabolic intermediate biosynthesis; chorismate biosynthesis; chorismate from D-erythrose 4-phosphate and phosphoenolpyruvate: step 7/7. In terms of biological role, catalyzes the anti-1,4-elimination of the C-3 phosphate and the C-6 proR hydrogen from 5-enolpyruvylshikimate-3-phosphate (EPSP) to yield chorismate, which is the branch point compound that serves as the starting substrate for the three terminal pathways of aromatic amino acid biosynthesis. This reaction introduces a second double bond into the aromatic ring system. The protein is Chorismate synthase of Chromohalobacter salexigens (strain ATCC BAA-138 / DSM 3043 / CIP 106854 / NCIMB 13768 / 1H11).